Reading from the N-terminus, the 281-residue chain is Formamidopyrimidine-DNA glycosylase (281 aa).

The active-site Schiff-base intermediate with DNA is the Pro2. The Proton donor role is filled by Glu3. Lys58 serves as the catalytic Proton donor; for beta-elimination activity. His100, Arg119, and Arg160 together coordinate DNA. An FPG-type zinc finger spans residues 245–281; that stretch reads RVYGREGAPCPTPGCTGTVQRIVQSGRSSFFCPLCQQ. Residue Arg271 is the Proton donor; for delta-elimination activity of the active site.

The protein belongs to the FPG family. As to quaternary structure, monomer. It depends on Zn(2+) as a cofactor.

The catalysed reaction is Hydrolysis of DNA containing ring-opened 7-methylguanine residues, releasing 2,6-diamino-4-hydroxy-5-(N-methyl)formamidopyrimidine.. It catalyses the reaction 2'-deoxyribonucleotide-(2'-deoxyribose 5'-phosphate)-2'-deoxyribonucleotide-DNA = a 3'-end 2'-deoxyribonucleotide-(2,3-dehydro-2,3-deoxyribose 5'-phosphate)-DNA + a 5'-end 5'-phospho-2'-deoxyribonucleoside-DNA + H(+). Functionally, involved in base excision repair of DNA damaged by oxidation or by mutagenic agents. Acts as a DNA glycosylase that recognizes and removes damaged bases. Has a preference for oxidized purines, such as 7,8-dihydro-8-oxoguanine (8-oxoG). Has AP (apurinic/apyrimidinic) lyase activity and introduces nicks in the DNA strand. Cleaves the DNA backbone by beta-delta elimination to generate a single-strand break at the site of the removed base with both 3'- and 5'-phosphates. In Paracoccus denitrificans (strain Pd 1222), this protein is Formamidopyrimidine-DNA glycosylase.